Reading from the N-terminus, the 701-residue chain is SH3 domain-binding protein 1 (701 aa).

Residues 1 to 10 (MMKRQLHRMR) are compositionally biased toward basic residues. 2 disordered regions span residues 1-23 (MMKR…RTPE) and 160-182 (SQAT…HSHT). The interaction with CGNL1 stretch occupies residues 1 to 275 (MMKRQLHRMR…TATHFPRVYG (275 aa)). One can recognise a BAR domain in the interval 17–262 (SLGRTPETAE…RENHGQADHS (246 aa)). 4 positions are modified to phosphoserine: Ser175, Ser241, Ser262, and Ser264. The region spanning 276 to 469 (VSLATHLQEL…ALIQSADTLF (194 aa)) is the Rho-GAP domain. An interaction with CD2AP region spans residues 470 to 701 (PGDINFNVSG…RPRSLASETN (232 aa)). The disordered stretch occupies residues 496–701 (SEELPSTAVP…RPRSLASETN (206 aa)). Residues 508–522 (ATTPAPAPAPAPAPA) show a composition bias toward pro residues. Phosphoserine is present on residues Ser544 and Ser550. 2 stretches are compositionally biased toward pro residues: residues 570–579 (PARPTMPPPQ) and 587–596 (PPAPPLPPGS). Position 601 is a phosphothreonine (Thr601). The short motif at 616 to 625 (APTVPPPLPP) is the SH3-binding element. 2 stretches are compositionally biased toward pro residues: residues 618–630 (TVPP…PPQP) and 641–652 (SPSPASPGPASP). Residue Thr626 is modified to Phosphothreonine. Ser653 bears the Phosphoserine mark. Residues 666-677 (GAATAEGGAPEA) show a composition bias toward low complexity. The segment covering 682–692 (PTPPAIPPQPR) has biased composition (pro residues).

In terms of assembly, interacts with RAC1. Interacts with the exocyst via EXOC4 and EXOC8; required for the localization of both SH3BP1 and the exocyst to the leading edge of migrating cells. Interacts with CD2AP and CGNL1; probably part of a complex at cell junctions. Interacts with CAPZA1; recruits CAPZA1 to forming cell junctions. May interact with AFDN. Interacts with PLXND1; they dissociate upon SEMA3E binding to PLXND1 allowing SH3BP1 to transduce downstream signal through RAC1 inactivation. Interacts with ABL1, GRB2 and SRC (via SH3 domain).

Its subcellular location is the cell projection. The protein localises to the cell junction. It is found in the tight junction. It localises to the adherens junction. The protein resides in the phagocytic cup. Its subcellular location is the nucleus. The protein localises to the cytoplasm. It is found in the cytosol. In terms of biological role, GTPase activating protein (GAP) which specifically converts GTP-bound Rho-type GTPases including RAC1 and CDC42 in their inactive GDP-bound form. By specifically inactivating RAC1 at the leading edge of migrating cells, it regulates the spatiotemporal organization of cell protrusions which is important for proper cell migration. Also negatively regulates CDC42 in the process of actin remodeling and the formation of epithelial cell junctions. Through its GAP activity toward RAC1 and/or CDC42 plays a specific role in phagocytosis of large particles. Specifically recruited by a PI3 kinase/PI3K-dependent mechanism to sites of large particles engagement, inactivates RAC1 and/or CDC42 allowing the reorganization of the underlying actin cytoskeleton required for engulfment. It also plays a role in angiogenesis and the process of repulsive guidance as part of a semaphorin-plexin signaling pathway. Following the binding of PLXND1 to extracellular SEMA3E it dissociates from PLXND1 and inactivates RAC1, inducing the intracellular reorganization of the actin cytoskeleton and the collapse of cells. The polypeptide is SH3 domain-binding protein 1 (Homo sapiens (Human)).